A 502-amino-acid chain; its full sequence is Histidine--tRNA ligase (502 aa).

This sequence belongs to the class-II aminoacyl-tRNA synthetase family. As to quaternary structure, homodimer.

The protein resides in the cytoplasm. It carries out the reaction tRNA(His) + L-histidine + ATP = L-histidyl-tRNA(His) + AMP + diphosphate + H(+). The protein is Histidine--tRNA ligase of Brucella ovis (strain ATCC 25840 / 63/290 / NCTC 10512).